The chain runs to 457 residues: Gamma-aminobutyric acid receptor subunit gamma-4 (457 aa).

An N-terminal signal peptide occupies residues 1-21 (MPAMVLLLCLALGPALRSARC). Topologically, residues 22–256 (ESTEEYDYDY…VSFDLSRRMG (235 aa)) are extracellular. Residues Asn35 and Asn112 are each glycosylated (N-linked (GlcNAc...) asparagine). An intrachain disulfide couples Cys173 to Cys187. The N-linked (GlcNAc...) asparagine glycan is linked to Asn230. The next 3 membrane-spanning stretches (helical) occupy residues 257–279 (YFAIQTYIPCILTVVLSWVSFWI), 283–305 (STPARTSLGITTVLTMTTLSTIS), and 317–339 (AMDLFVSVCFIFVFAALMEYATL). At 340–433 (NYLVGNKKPL…VRIHISRLDS (94 aa)) the chain is on the cytoplasmic side. A helical membrane pass occupies residues 434–457 (YSRVFFPTAFLLFNIVYWIAYLYL).

This sequence belongs to the ligand-gated ion channel (TC 1.A.9) family. Gamma-aminobutyric acid receptor (TC 1.A.9.5) subfamily. GABRG4 sub-subfamily. Generally pentameric. There are five types of GABA(A) receptor chains: alpha, beta, gamma, delta, and rho. Abundant in several brain regions, including the ectostriatum, nucleus rotundus and hyperstriatum ventrale.

The protein localises to the postsynaptic cell membrane. It is found in the cell membrane. GABA, the major inhibitory neurotransmitter in the vertebrate brain, mediates neuronal inhibition by binding to the GABA/benzodiazepine receptor and opening an integral chloride channel. This is Gamma-aminobutyric acid receptor subunit gamma-4 (GABRG4) from Gallus gallus (Chicken).